The primary structure comprises 65 residues: Large ribosomal subunit protein bL35 (65 aa).

The disordered stretch occupies residues 1–40; that stretch reads MPKMKTNSGSKKRFALTGTGKIKRKHAFHSHILTKKSKKR. A compositionally biased stretch (basic residues) spans 21 to 40; the sequence is KIKRKHAFHSHILTKKSKKR.

Belongs to the bacterial ribosomal protein bL35 family.

In Bacteroides fragilis (strain ATCC 25285 / DSM 2151 / CCUG 4856 / JCM 11019 / LMG 10263 / NCTC 9343 / Onslow / VPI 2553 / EN-2), this protein is Large ribosomal subunit protein bL35.